A 22-amino-acid chain; its full sequence is Peptide PGLa-B1 (22 aa).

Position 22 is a leucine amide (L22).

As to expression, expressed by the skin glands.

The protein localises to the secreted. Has antibacterial and antifungal activity. The protein is Peptide PGLa-B1 of Xenopus borealis (Kenyan clawed frog).